Consider the following 261-residue polypeptide: Lysosome-associated membrane glycoprotein 5 (261 aa).

The first 29 residues, 1 to 29 (MDLQGRAVPSVDRLRVLLMLFHTMAQIMA), serve as a signal peptide directing secretion. The Extracellular segment spans residues 30 to 234 (EQEVENLSGL…AVDEREQLEE (205 aa)). N35, N53, and N126 each carry an N-linked (GlcNAc...) asparagine glycan. Residues 235 to 255 (TLPLILGLILGLVIVVTLAIY) traverse the membrane as a helical segment. Residues 256-261 (HVHPQK) lie on the Cytoplasmic side of the membrane.

The protein belongs to the LAMP family. In terms of processing, glycosylated.

It localises to the cytoplasmic vesicle membrane. It is found in the cell membrane. The protein resides in the cell projection. Its subcellular location is the dendrite. The protein localises to the cytoplasmic vesicle. It localises to the secretory vesicle. It is found in the synaptic vesicle membrane. The protein resides in the growth cone membrane. Its subcellular location is the early endosome membrane. The protein localises to the recycling endosome. It localises to the endoplasmic reticulum-Golgi intermediate compartment membrane. It is found in the endosome membrane. Functionally, plays a role in short-term synaptic plasticity in a subset of GABAergic neurons in the brain. This chain is Lysosome-associated membrane glycoprotein 5 (LAMP5), found in Pongo abelii (Sumatran orangutan).